The sequence spans 207 residues: Large ribosomal subunit protein uL4 (207 aa).

Positions arginine 44–glycine 71 are disordered. The span at glycine 60–glycine 71 shows a compositional bias: basic residues.

This sequence belongs to the universal ribosomal protein uL4 family. Part of the 50S ribosomal subunit.

One of the primary rRNA binding proteins, this protein initially binds near the 5'-end of the 23S rRNA. It is important during the early stages of 50S assembly. It makes multiple contacts with different domains of the 23S rRNA in the assembled 50S subunit and ribosome. In terms of biological role, forms part of the polypeptide exit tunnel. This is Large ribosomal subunit protein uL4 from Alkaliphilus oremlandii (strain OhILAs) (Clostridium oremlandii (strain OhILAs)).